A 309-amino-acid polypeptide reads, in one-letter code: Taste receptor type 2 member 20 (309 aa).

The Extracellular segment spans residues 1-6 (MMSFLH). The chain crosses the membrane as a helical span at residues 7-27 (IVFSILVVVAFILGNFANGFI). Residues 28–46 (ALINFIAWVKRQKISSADQ) are Cytoplasmic-facing. A helical membrane pass occupies residues 47–67 (IIAALAVSRVGLLWVILLHWY). The Extracellular portion of the chain corresponds to 68–79 (STVLNPTSSNLK). A helical transmembrane segment spans residues 80–100 (VIIFISNAWAVTNHFSIWLAT). Residues 101–125 (SLSIFYLLKIVNFSRLIFHHLKRKA) lie on the Cytoplasmic side of the membrane. A helical membrane pass occupies residues 126-146 (KSVVLVIVLGSLFFLVCHLVM). Residues 147-178 (KHTYINVWTEECEGNVTWKIKLRNAMHLSNLT) are Extracellular-facing. Asn161 and Asn176 each carry an N-linked (GlcNAc...) asparagine glycan. Residues 179–199 (VAMLANLIPFTLTLISFLLLI) form a helical membrane-spanning segment. Over 200 to 229 (YSLCKHLKKMQLHGKGSQDPSTKIHIKALQ) the chain is Cytoplasmic. The chain crosses the membrane as a helical span at residues 230 to 250 (TVTSFLILLAIYFLCLIISFW). Over 251-259 (NFKMRPKEI) the chain is Extracellular. The helical transmembrane segment at 260-280 (VLMLCQAFGIIYPSFHSFILI) threads the bilayer. The Cytoplasmic segment spans residues 281–309 (WGNKTLKQTFLSVLWQVTCWAKGQNQSTP).

Belongs to the G-protein coupled receptor T2R family. Expressed in subsets of taste receptor cells of the tongue and exclusively in gustducin-positive cells.

The protein localises to the membrane. Functionally, receptor that may play a role in the perception of bitterness and is gustducin-linked. May play a role in sensing the chemical composition of the gastrointestinal content. The activity of this receptor may stimulate alpha gustducin, mediate PLC-beta-2 activation and lead to the gating of TRPM5. The sequence is that of Taste receptor type 2 member 20 (TAS2R20) from Homo sapiens (Human).